The sequence spans 61 residues: Small ribosomal subunit protein uS14 (61 aa).

Zn(2+)-binding residues include Cys-24, Cys-27, Cys-40, and Cys-43.

This sequence belongs to the universal ribosomal protein uS14 family. Zinc-binding uS14 subfamily. Part of the 30S ribosomal subunit. Contacts proteins S3 and S10. Requires Zn(2+) as cofactor.

Its function is as follows. Binds 16S rRNA, required for the assembly of 30S particles and may also be responsible for determining the conformation of the 16S rRNA at the A site. This chain is Small ribosomal subunit protein uS14, found in Deinococcus deserti (strain DSM 17065 / CIP 109153 / LMG 22923 / VCD115).